Consider the following 313-residue polypeptide: Aspartate carbamoyltransferase catalytic subunit (313 aa).

Carbamoyl phosphate-binding residues include R61 and T62. K89 serves as a coordination point for L-aspartate. Carbamoyl phosphate-binding residues include R111, H139, and Q142. L-aspartate contacts are provided by R172 and R227. G268 and P269 together coordinate carbamoyl phosphate.

Belongs to the aspartate/ornithine carbamoyltransferase superfamily. ATCase family. In terms of assembly, heterododecamer (2C3:3R2) of six catalytic PyrB chains organized as two trimers (C3), and six regulatory PyrI chains organized as three dimers (R2).

The enzyme catalyses carbamoyl phosphate + L-aspartate = N-carbamoyl-L-aspartate + phosphate + H(+). Its pathway is pyrimidine metabolism; UMP biosynthesis via de novo pathway; (S)-dihydroorotate from bicarbonate: step 2/3. Functionally, catalyzes the condensation of carbamoyl phosphate and aspartate to form carbamoyl aspartate and inorganic phosphate, the committed step in the de novo pyrimidine nucleotide biosynthesis pathway. The polypeptide is Aspartate carbamoyltransferase catalytic subunit (Gluconobacter oxydans (strain 621H) (Gluconobacter suboxydans)).